The chain runs to 227 residues: MAYPFELGFQDATSPIMEELLHFHDHTLMIVFLISSLVLYIISLMLTTKLTHTSTMDAQEIETIWTILPAIILILIALPSLRILYMMDEINDPSLTVKTMGHQWYWSYEYTDYEDLNFDSYMIPTSDLNPGELRLLEVDNRVVLPMELPIRMLISSEDVLHSWAVPSLGLKTDAIPGRLNQATLTSTRPGLYYGQCSEICGSNHSFMPIVLELVPLKHFENWSSSML.

At 1–14 (MAYPFELGFQDATS) the chain is on the mitochondrial intermembrane side. Residues 15-45 (PIMEELLHFHDHTLMIVFLISSLVLYIISLM) traverse the membrane as a helical segment. Residues 46–59 (LTTKLTHTSTMDAQ) are Mitochondrial matrix-facing. Residues 60 to 87 (EIETIWTILPAIILILIALPSLRILYMM) form a helical membrane-spanning segment. The Mitochondrial intermembrane segment spans residues 88–227 (DEINDPSLTV…HFENWSSSML (140 aa)). Cu cation is bound by residues His161, Cys196, Glu198, Cys200, His204, and Met207. Glu198 serves as a coordination point for Mg(2+).

Belongs to the cytochrome c oxidase subunit 2 family. Component of the cytochrome c oxidase (complex IV, CIV), a multisubunit enzyme composed of 14 subunits. The complex is composed of a catalytic core of 3 subunits MT-CO1, MT-CO2 and MT-CO3, encoded in the mitochondrial DNA, and 11 supernumerary subunits COX4I, COX5A, COX5B, COX6A, COX6B, COX6C, COX7A, COX7B, COX7C, COX8 and NDUFA4, which are encoded in the nuclear genome. The complex exists as a monomer or a dimer and forms supercomplexes (SCs) in the inner mitochondrial membrane with NADH-ubiquinone oxidoreductase (complex I, CI) and ubiquinol-cytochrome c oxidoreductase (cytochrome b-c1 complex, complex III, CIII), resulting in different assemblies (supercomplex SCI(1)III(2)IV(1) and megacomplex MCI(2)III(2)IV(2)). Found in a complex with TMEM177, COA6, COX18, COX20, SCO1 and SCO2. Interacts with TMEM177 in a COX20-dependent manner. Interacts with COX20. Interacts with COX16. It depends on Cu cation as a cofactor.

The protein resides in the mitochondrion inner membrane. It carries out the reaction 4 Fe(II)-[cytochrome c] + O2 + 8 H(+)(in) = 4 Fe(III)-[cytochrome c] + 2 H2O + 4 H(+)(out). Component of the cytochrome c oxidase, the last enzyme in the mitochondrial electron transport chain which drives oxidative phosphorylation. The respiratory chain contains 3 multisubunit complexes succinate dehydrogenase (complex II, CII), ubiquinol-cytochrome c oxidoreductase (cytochrome b-c1 complex, complex III, CIII) and cytochrome c oxidase (complex IV, CIV), that cooperate to transfer electrons derived from NADH and succinate to molecular oxygen, creating an electrochemical gradient over the inner membrane that drives transmembrane transport and the ATP synthase. Cytochrome c oxidase is the component of the respiratory chain that catalyzes the reduction of oxygen to water. Electrons originating from reduced cytochrome c in the intermembrane space (IMS) are transferred via the dinuclear copper A center (CU(A)) of subunit 2 and heme A of subunit 1 to the active site in subunit 1, a binuclear center (BNC) formed by heme A3 and copper B (CU(B)). The BNC reduces molecular oxygen to 2 water molecules using 4 electrons from cytochrome c in the IMS and 4 protons from the mitochondrial matrix. This is Cytochrome c oxidase subunit 2 (MT-CO2) from Tamias townsendii (Townsend's chipmunk).